The primary structure comprises 189 residues: Phosphomevalonate kinase (189 aa).

ATP is bound by residues 10–16 and R138; that span reads KRKCGKD. N168 provides a ligand contact to substrate.

It is found in the cytoplasm. The protein localises to the cytosol. It catalyses the reaction (R)-5-phosphomevalonate + ATP = (R)-5-diphosphomevalonate + ADP. The protein operates within isoprenoid biosynthesis; isopentenyl diphosphate biosynthesis via mevalonate pathway; isopentenyl diphosphate from (R)-mevalonate: step 2/3. The protein is Phosphomevalonate kinase of Drosophila melanogaster (Fruit fly).